Reading from the N-terminus, the 181-residue chain is Ankyrin repeat-containing protein YGL242C (181 aa).

An N-acetylmethionine modification is found at methionine 1. ANK repeat units follow at residues 49–78 (LGNT…EIEI) and 85–120 (DGDT…DPRV). The interval 151 to 181 (IDSTNGSGDNNEDGEMIDDGPSDDDEEDDKK) is disordered. Acidic residues predominate over residues 160-181 (NNEDGEMIDDGPSDDDEEDDKK). The residue at position 172 (serine 172) is a Phosphoserine.

This is Ankyrin repeat-containing protein YGL242C from Saccharomyces cerevisiae (strain ATCC 204508 / S288c) (Baker's yeast).